Here is a 260-residue protein sequence, read N- to C-terminus: MVLIRVLANLLILQLSYAQKSSELVVGGDECNINEHRFLVALYEYTSMTFICGGTLINQEWVLTAAHCDRDTIYIYIGMHDKYVKFDDEQGRHPKEKYIFNCSNNFTKWDKDIMLIKLDYPVNYSEHIAPLSLPSSPPSMGSVCRVMGWGAITPTNETLPDVPHCANINILDHALCRAVFPGLPATSRTLCAGVLQGGTDTCNRDSGGPLICNGQFQGIVFWGWYPCAQPRVPALYTKVFDHLDWIQSIIAGNTDAACPP.

The N-terminal stretch at methionine 1 to alanine 18 is a signal peptide. Positions glutamine 19–leucine 24 are excised as a propeptide. The Peptidase S1 domain maps to valine 25 to alanine 251. 6 disulfide bridges follow: cysteine 31–cysteine 165, cysteine 52–cysteine 68, cysteine 102–cysteine 258, cysteine 144–cysteine 212, cysteine 176–cysteine 191, and cysteine 202–cysteine 227. The active-site Charge relay system is the histidine 67. N-linked (GlcNAc...) asparagine glycosylation is found at asparagine 101 and asparagine 105. The Charge relay system role is filled by aspartate 112. Asparagine 123 and asparagine 156 each carry an N-linked (GlcNAc...) asparagine glycan. Serine 206 functions as the Charge relay system in the catalytic mechanism.

Belongs to the peptidase S1 family. Snake venom subfamily. As to quaternary structure, monomer. As to expression, expressed by the venom gland.

It localises to the secreted. Snake venom serine protease that may act in the hemostasis system of the prey. The polypeptide is Snake venom serine protease 2B (TLG2B) (Craspedocephalus gramineus (Bamboo pit viper)).